Here is a 455-residue protein sequence, read N- to C-terminus: Golgi pH regulator (455 aa).

The next 2 membrane-spanning stretches (helical) occupy residues 5-25 and 46-66; these read ADSV…WLFF and VTFA…LGLL. N-linked (GlcNAc...) asparagine glycosylation occurs at N67. 3 helical membrane-spanning segments follow: residues 79–99, 111–131, and 150–170; these read LCVI…YFVV, LFSC…GDPF, and VGVI…VNCP. A glycan (N-linked (GlcNAc...) asparagine) is linked at N180. The next 4 membrane-spanning stretches (helical) occupy residues 290 to 310, 343 to 363, 378 to 398, and 425 to 445; these read GYFF…NIVF, ISFI…LITL, VIVL…VLLI, and WFDV…YLAH.

Belongs to the Golgi pH regulator (TC 1.A.38) family. In terms of assembly, homotrimer.

Its subcellular location is the golgi apparatus membrane. The enzyme catalyses iodide(out) = iodide(in). It catalyses the reaction chloride(in) = chloride(out). The catalysed reaction is bromide(in) = bromide(out). It carries out the reaction fluoride(in) = fluoride(out). In terms of biological role, voltage-gated channel that enables the transfer of anions such as iodide, chloride, bromide and fluoride which may function in counter-ion conductance and participates in Golgi acidification. The sequence is that of Golgi pH regulator (gpr89-b) from Xenopus laevis (African clawed frog).